A 214-amino-acid polypeptide reads, in one-letter code: Cytochrome b (214 aa).

The next 4 membrane-spanning stretches (helical) occupy residues 31–51 (FGSM…FLAI), 75–96 (WIMQ…YIHI), 111–131 (WLSG…GYVL), and 176–196 (FFAL…IHII). Heme b-binding residues include His81 and His95. Heme b-binding residues include His180 and His194. His199 contacts a ubiquinone.

This sequence belongs to the cytochrome b family. The cytochrome bc1 complex contains 3 respiratory subunits (MT-CYB, CYC1 and UQCRFS1), 2 core proteins (UQCRC1 and UQCRC2) and probably 6 low-molecular weight proteins. Requires heme b as cofactor.

It is found in the mitochondrion inner membrane. In terms of biological role, component of the ubiquinol-cytochrome c reductase complex (complex III or cytochrome b-c1 complex) that is part of the mitochondrial respiratory chain. The b-c1 complex mediates electron transfer from ubiquinol to cytochrome c. Contributes to the generation of a proton gradient across the mitochondrial membrane that is then used for ATP synthesis. The sequence is that of Cytochrome b (MT-CYB) from Atractaspis micropholis (Mole viper).